The primary structure comprises 702 residues: Flagellar operon control protein UmoB (702 aa).

5 helical membrane-spanning segments follow: residues Ser-4–Phe-24, Gly-204–Met-224, Val-227–Ile-247, Ile-343–Ser-363, and Gly-656–Ile-676.

The protein belongs to the IgaA family.

Its subcellular location is the cell inner membrane. In terms of biological role, up-regulator of flagellar flhDC master operon. This is Flagellar operon control protein UmoB (umoB) from Proteus mirabilis.